The sequence spans 234 residues: Peptidase E (234 aa).

Active-site charge relay system residues include Ser123, Asp138, and His160.

This sequence belongs to the peptidase S51 family.

It is found in the cytoplasm. It catalyses the reaction Dipeptidase E catalyzes the hydrolysis of dipeptides Asp-|-Xaa. It does not act on peptides with N-terminal Glu, Asn or Gln, nor does it cleave isoaspartyl peptides.. Hydrolyzes dipeptides containing N-terminal aspartate residues. May play a role in allowing the cell to use peptide aspartate to spare carbon otherwise required for the synthesis of the aspartate family of amino acids. This Actinobacillus pleuropneumoniae serotype 3 (strain JL03) protein is Peptidase E.